Consider the following 633-residue polypeptide: tRNA uridine 5-carboxymethylaminomethyl modification enzyme MnmG (633 aa).

18-23 (GAGHAG) serves as a coordination point for FAD. The interval 208-232 (PRVNGNTIDFDKTEEQPGDKTPNHF) is disordered. Positions 216 to 229 (DFDKTEEQPGDKTP) are enriched in basic and acidic residues. 279–293 (GPRYCPSIEDKIVRF) is a binding site for NAD(+).

This sequence belongs to the MnmG family. Homodimer. Heterotetramer of two MnmE and two MnmG subunits. FAD serves as cofactor.

It is found in the cytoplasm. NAD-binding protein involved in the addition of a carboxymethylaminomethyl (cmnm) group at the wobble position (U34) of certain tRNAs, forming tRNA-cmnm(5)s(2)U34. This chain is tRNA uridine 5-carboxymethylaminomethyl modification enzyme MnmG, found in Lacticaseibacillus paracasei (strain ATCC 334 / BCRC 17002 / CCUG 31169 / CIP 107868 / KCTC 3260 / NRRL B-441) (Lactobacillus paracasei).